The following is a 475-amino-acid chain: MSDFDEFERQLNENKQERDKENRHRKRSHSRSRSRDRKRRSRSRDRRNRDQRSASRDRRRRSKPLTRGAKEEHGGLIRSPRHEKKKKVRKYWDVPPPGFEHITPMQYKAMQAAGQIPATALLPTMTPDGLAVTPTPVPVVGSQMTRQARRLYVGNIPFGITEEAMMDFFNAQMRLGGLTQAPGNPVLAVQINQDKNFAFLEFRSVDETTQAMAFDGIIFQGQSLKIRRPHDYQPLPGMSENPSVYVPGVVSTVVPDSAHKLFIGGLPNYLNDDQVKELLTSFGPLKAFNLVKDSATGLSKGYAFCEYVDINVTDQAIAGLNGMQLGDKKLLVQRASVGAKNATLVSPPSTINQTPVTLQVPGLMSSQVQMGGHPTEVLCLMNMVLPEELLDDEEYEEIVEDVRDECSKYGLVKSIEIPRPVDGVEVPGCGKIFVEFTSVFDCQKAMQGLTGRKFANRVVVTKYCDPDSYHRRDFW.

The tract at residues 1–90 is disordered; it reads MSDFDEFERQ…RHEKKKKVRK (90 aa). An N-acetylserine modification is found at Ser-2. Ser-2 is modified (phosphoserine). The tract at residues 2-93 is required for interaction with PRPF19; that stretch reads SDFDEFERQL…KKKKVRKYWD (92 aa). A compositionally biased stretch (basic and acidic residues) spans 7–22; it reads FERQLNENKQERDKEN. Lys-15 carries the post-translational modification 5-hydroxylysine; by JMJD6; alternate. Lys-15 is covalently cross-linked (Glycyl lysine isopeptide (Lys-Gly) (interchain with G-Cter in SUMO2); alternate). Residues 17–47 are necessary and sufficient to stimulate pre-mRNAs 3'-end cleavage in a CFIm complex-dependent manner; it reads ERDKENRHRKRSHSRSRSRDRKRRSRSRDRR. Basic residues predominate over residues 23–46; sequence RHRKRSHSRSRSRDRKRRSRSRDR. Over residues 47-56 the composition is skewed to basic and acidic residues; sequence RNRDQRSASR. Residue Lys-70 forms a Glycyl lysine isopeptide (Lys-Gly) (interchain with G-Cter in SUMO2); alternate linkage. Lys-70 is modified (N6-acetyllysine; alternate). A Phosphoserine modification is found at Ser-79. Over residues 79–89 the composition is skewed to basic residues; sequence SPRHEKKKKVR. RRM domains follow at residues 149–231, 259–337, and 385–466; these read RRLY…RPHD, HKLF…RASV, and LPEE…YCDP. Residue Lys-276 is modified to 5-hydroxylysine; by JMJD6. Position 294 is a phosphoserine (Ser-294).

The protein belongs to the splicing factor SR family. As to quaternary structure, interacts with U2AF1L4. Heterodimer with U2AF1. Binds unphosphorylated SF1. Interacts with SCAF11 and SNW1. Interacts with ZRSR2/U2AF1-RS2. Interacts with RBM17. Interacts with PRPF19; the interaction is direct. Interacts with POLR2A (via the C-terminal domain); recruits PRPF19 and the Prp19 complex to the pre-mRNA. Interacts with KHDC4 (Isoform 2). Interacts with ZRSR2. Interacts with the SF3B complex composed of SF3B1, SF3B2, SF3B3, SF3B4, SF3B5, SF3B6 and PHF5A. Interacts (via N-terminus) with CPSF7 (via C-terminus); this interaction stimulates pre-mRNA 3'-end processing by promoting the recruitment of the CFIm complex to cleavage and polyadenylation signals. Interacts with ARGLU1; interaction may be involved in ARGLU1-mediated modulation of alternative splicing. In terms of processing, lysyl-hydroxylation at Lys-15 and Lys-276 affects the mRNA splicing activity of the protein, leading to regulate some, but not all, alternative splicing events.

Its subcellular location is the nucleus. In terms of biological role, plays a role in pre-mRNA splicing and 3'-end processing. By recruiting PRPF19 and the PRP19C/Prp19 complex/NTC/Nineteen complex to the RNA polymerase II C-terminal domain (CTD), and thereby pre-mRNA, may couple transcription to splicing. Induces cardiac troponin-T (TNNT2) pre-mRNA exon inclusion in muscle. Regulates the TNNT2 exon 5 inclusion through competition with MBNL1. Binds preferentially to a single-stranded structure within the polypyrimidine tract of TNNT2 intron 4 during spliceosome assembly. Required for the export of mRNA out of the nucleus, even if the mRNA is encoded by an intron-less gene. Represses the splicing of MAPT/Tau exon 10. Positively regulates pre-mRNA 3'-end processing by recruiting the CFIm complex to cleavage and polyadenylation signals. The polypeptide is Splicing factor U2AF 65 kDa subunit (U2AF2) (Homo sapiens (Human)).